The sequence spans 159 residues: SsrA-binding protein (159 aa).

The disordered stretch occupies residues 131-159; sequence KGKKLHDKRESEKERDWNRQKSRLLKDNG. The span at 137-159 shows a compositional bias: basic and acidic residues; the sequence is DKRESEKERDWNRQKSRLLKDNG.

The protein belongs to the SmpB family.

It is found in the cytoplasm. Its function is as follows. Required for rescue of stalled ribosomes mediated by trans-translation. Binds to transfer-messenger RNA (tmRNA), required for stable association of tmRNA with ribosomes. tmRNA and SmpB together mimic tRNA shape, replacing the anticodon stem-loop with SmpB. tmRNA is encoded by the ssrA gene; the 2 termini fold to resemble tRNA(Ala) and it encodes a 'tag peptide', a short internal open reading frame. During trans-translation Ala-aminoacylated tmRNA acts like a tRNA, entering the A-site of stalled ribosomes, displacing the stalled mRNA. The ribosome then switches to translate the ORF on the tmRNA; the nascent peptide is terminated with the 'tag peptide' encoded by the tmRNA and targeted for degradation. The ribosome is freed to recommence translation, which seems to be the essential function of trans-translation. The polypeptide is SsrA-binding protein (Rhizobium etli (strain CIAT 652)).